The sequence spans 976 residues: R3H domain-containing protein 2 (976 aa).

Disordered stretches follow at residues 32 to 71 (ISKTPSKEEIEKECEDTSLRQETQRRTSNHGHARKRAKSN) and 105 to 147 (ISCP…QEYT). Residues 36–56 (PSKEEIEKECEDTSLRQETQR) are compositionally biased toward basic and acidic residues. At Ser37 the chain carries Phosphoserine. Basic residues predominate over residues 58–71 (TSNHGHARKRAKSN). The segment covering 109 to 143 (SDKEEEKSTKDVSEKEDKDKNKEKIPRKMLSRDSS) has biased composition (basic and acidic residues). At Ser143 the chain carries Phosphoserine. An R3H domain is found at 169 to 232 (RMMLLKLEQE…AVIINKTSNT (64 aa)). The SUZ domain occupies 233-310 (RIPEQRFSEH…NREGLSRTSS (78 aa)). The segment covering 257–269 (LKRDDASMDRDDN) has biased composition (basic and acidic residues). Disordered stretches follow at residues 257–376 (LKRD…ISRP), 401–457 (CTAQ…EAAD), 480–560 (ASTG…PGLQ), 661–725 (GTSP…PSMV), and 738–780 (RGQK…SLSS). Positions 306-317 (SRTSSSRQSSTD) are enriched in low complexity. Phosphoserine is present on residues Ser330, Ser333, and Ser349. Positions 401–415 (CTAQQQQQQQQQQLP) are enriched in low complexity. 2 stretches are compositionally biased toward polar residues: residues 441 to 453 (PFGQMSLSRQGST) and 480 to 504 (ASTGQPLPTSNYSTSSHAPPTQQVL). Residues 543-560 (SPQRGQQLPQPSQQPGLQ) show a composition bias toward low complexity. Positions 682-691 (SPSPCSPPQM) are enriched in pro residues. Over residues 692 to 714 (PQQYSGVSPSGPGVVVMQLNVPN) the composition is skewed to low complexity. Residues 748 to 758 (PDSSPQANTQM) are compositionally biased toward polar residues. The span at 759 to 777 (SSSPVTSPTQSPAPSPVTS) shows a compositional bias: low complexity. 2 positions are modified to phosphoserine: Ser853 and Ser855. Phosphothreonine is present on residues Thr856 and Thr860.

The protein resides in the nucleus. This is R3H domain-containing protein 2 (R3HDM2) from Homo sapiens (Human).